A 154-amino-acid polypeptide reads, in one-letter code: Myoglobin (154 aa).

The region spanning 2–148 is the Globin domain; that stretch reads GLSDGEWQLV…FRNDMAAKYK (147 aa). At Ser-4 the chain carries Phosphoserine. Residue His-65 participates in nitrite binding. His-65 lines the O2 pocket. Thr-68 carries the post-translational modification Phosphothreonine. Residue His-94 coordinates heme b.

It belongs to the globin family. In terms of assembly, monomeric.

It is found in the cytoplasm. The protein localises to the sarcoplasm. The enzyme catalyses Fe(III)-heme b-[protein] + nitric oxide + H2O = Fe(II)-heme b-[protein] + nitrite + 2 H(+). The catalysed reaction is H2O2 + AH2 = A + 2 H2O. Its function is as follows. Monomeric heme protein which primary function is to store oxygen and facilitate its diffusion within muscle tissues. Reversibly binds oxygen through a pentacoordinated heme iron and enables its timely and efficient release as needed during periods of heightened demand. Depending on the oxidative conditions of tissues and cells, and in addition to its ability to bind oxygen, it also has a nitrite reductase activity whereby it regulates the production of bioactive nitric oxide. Under stress conditions, like hypoxia and anoxia, it also protects cells against reactive oxygen species thanks to its pseudoperoxidase activity. The chain is Myoglobin (MB) from Ornithorhynchus anatinus (Duckbill platypus).